Here is a 139-residue protein sequence, read N- to C-terminus: Prefoldin subunit alpha (139 aa).

Belongs to the prefoldin subunit alpha family. As to quaternary structure, heterohexamer of two alpha and four beta subunits.

The protein localises to the cytoplasm. Functionally, molecular chaperone capable of stabilizing a range of proteins. Seems to fulfill an ATP-independent, HSP70-like function in archaeal de novo protein folding. The chain is Prefoldin subunit alpha from Picrophilus torridus (strain ATCC 700027 / DSM 9790 / JCM 10055 / NBRC 100828 / KAW 2/3).